Here is a 151-residue protein sequence, read N- to C-terminus: 3-hydroxyacyl-thioester dehydratase Z (151 aa).

One can recognise a MaoC-like domain in the interval 11–131; sequence AAAAGEKVGQ…TVQATVSTTV (121 aa). Substrate-binding positions include 60–63, 86–89, 97–99, Gln124, and Arg148; these read IAHG, AINY, and PAP.

Belongs to the enoyl-CoA hydratase/isomerase family. Homodimer.

It carries out the reaction a (3R)-3-hydroxyacyl-CoA = a (2E)-enoyl-CoA + H2O. In terms of biological role, shows trans-enoyl-CoA hydratase/3-hydroxyacyl-CoA dehydratase activity. The polypeptide is 3-hydroxyacyl-thioester dehydratase Z (Mycobacterium bovis (strain ATCC BAA-935 / AF2122/97)).